We begin with the raw amino-acid sequence, 580 residues long: Phosphomethylpyrimidine synthase (580 aa).

Residues 1–58 (MTPTQNEIHPKHSYSPIRKHGLEVPETEIALDDSPSGPNEPFRIYRTRGPETDPTLGL) are disordered. Residues N180, M209, Y238, H274, 294-296 (SRG), 335-338 (DGLR), and E374 contribute to the substrate site. H378 contacts Zn(2+). Substrate is bound at residue Y401. H442 lines the Zn(2+) pocket. C522, C525, and C530 together coordinate [4Fe-4S] cluster. Residues 554–580 (VGASDSTEGMKEKSREFVAGGGEVYRE) are disordered.

Belongs to the ThiC family. The cofactor is [4Fe-4S] cluster.

It catalyses the reaction 5-amino-1-(5-phospho-beta-D-ribosyl)imidazole + S-adenosyl-L-methionine = 4-amino-2-methyl-5-(phosphooxymethyl)pyrimidine + CO + 5'-deoxyadenosine + formate + L-methionine + 3 H(+). It functions in the pathway cofactor biosynthesis; thiamine diphosphate biosynthesis. Its function is as follows. Catalyzes the synthesis of the hydroxymethylpyrimidine phosphate (HMP-P) moiety of thiamine from aminoimidazole ribotide (AIR) in a radical S-adenosyl-L-methionine (SAM)-dependent reaction. This Corynebacterium efficiens (strain DSM 44549 / YS-314 / AJ 12310 / JCM 11189 / NBRC 100395) protein is Phosphomethylpyrimidine synthase.